Consider the following 540-residue polypeptide: Chaperonin GroEL (540 aa).

ATP is bound by residues 30–33 (TLGP), Lys51, 87–91 (DGTTT), Gly415, and Asp495.

Belongs to the chaperonin (HSP60) family. Forms a cylinder of 14 subunits composed of two heptameric rings stacked back-to-back. Interacts with the co-chaperonin GroES.

The protein resides in the cytoplasm. It carries out the reaction ATP + H2O + a folded polypeptide = ADP + phosphate + an unfolded polypeptide.. In terms of biological role, together with its co-chaperonin GroES, plays an essential role in assisting protein folding. The GroEL-GroES system forms a nano-cage that allows encapsulation of the non-native substrate proteins and provides a physical environment optimized to promote and accelerate protein folding. This chain is Chaperonin GroEL, found in Rhodothermus marinus (Rhodothermus obamensis).